Here is a 520-residue protein sequence, read N- to C-terminus: F-box/LRR-repeat protein At3g59200 (520 aa).

Residues Arg6–Ser54 enclose the F-box domain. 3 LRR repeats span residues Cys170–Asn197, Phe219–Asp244, and Asn340–Arg365.

The polypeptide is F-box/LRR-repeat protein At3g59200 (Arabidopsis thaliana (Mouse-ear cress)).